The primary structure comprises 174 residues: Endoribonuclease YbeY (174 aa).

The Zn(2+) site is built by H129, H133, and H139.

Belongs to the endoribonuclease YbeY family. Zn(2+) is required as a cofactor.

It is found in the cytoplasm. Single strand-specific metallo-endoribonuclease involved in late-stage 70S ribosome quality control and in maturation of the 3' terminus of the 16S rRNA. The polypeptide is Endoribonuclease YbeY (Lactobacillus delbrueckii subsp. bulgaricus (strain ATCC 11842 / DSM 20081 / BCRC 10696 / JCM 1002 / NBRC 13953 / NCIMB 11778 / NCTC 12712 / WDCM 00102 / Lb 14)).